A 363-amino-acid chain; its full sequence is S-adenosylmethionine:tRNA ribosyltransferase-isomerase (363 aa).

This sequence belongs to the QueA family. In terms of assembly, monomer.

The protein resides in the cytoplasm. It carries out the reaction 7-aminomethyl-7-carbaguanosine(34) in tRNA + S-adenosyl-L-methionine = epoxyqueuosine(34) in tRNA + adenine + L-methionine + 2 H(+). Its pathway is tRNA modification; tRNA-queuosine biosynthesis. Functionally, transfers and isomerizes the ribose moiety from AdoMet to the 7-aminomethyl group of 7-deazaguanine (preQ1-tRNA) to give epoxyqueuosine (oQ-tRNA). The chain is S-adenosylmethionine:tRNA ribosyltransferase-isomerase from Brucella anthropi (strain ATCC 49188 / DSM 6882 / CCUG 24695 / JCM 21032 / LMG 3331 / NBRC 15819 / NCTC 12168 / Alc 37) (Ochrobactrum anthropi).